We begin with the raw amino-acid sequence, 164 residues long: FMN reductase (NADH) RutF (164 aa).

It belongs to the non-flavoprotein flavin reductase family. RutF subfamily.

It catalyses the reaction FMNH2 + NAD(+) = FMN + NADH + 2 H(+). Its function is as follows. Catalyzes the reduction of FMN to FMNH2 which is used to reduce pyrimidine by RutA via the Rut pathway. The chain is FMN reductase (NADH) RutF from Escherichia coli (strain K12 / MC4100 / BW2952).